The sequence spans 111 residues: uncharacterized protein (111 aa).

Residues 18 to 41 (FFYFFFISFYTLWIVFFLLHLSFF) traverse the membrane as a helical segment.

The protein resides in the membrane. This is an uncharacterized protein from Saccharomyces cerevisiae (strain ATCC 204508 / S288c) (Baker's yeast).